Here is a 91-residue protein sequence, read N- to C-terminus: Small ribosomal subunit protein uS19 (91 aa).

The segment at G72–K91 is disordered.

It belongs to the universal ribosomal protein uS19 family.

Protein S19 forms a complex with S13 that binds strongly to the 16S ribosomal RNA. This is Small ribosomal subunit protein uS19 from Mycoplasma mobile (strain ATCC 43663 / 163K / NCTC 11711) (Mesomycoplasma mobile).